A 659-amino-acid chain; its full sequence is Exocyst complex component 5 (659 aa).

Residues 1–58 adopt a coiled-coil conformation; it reads MRFEEEIGSLQMLCDQFQNKINTLEKQMNEEKKDYVQKLHRLHEKNGEAIDKMKQLDH.

The protein belongs to the SEC10 family. In terms of assembly, the exocyst complex is composed of sec-3/exoc1, sec-5/exoc2, sec-6/exoc3, sec-8/exoc4, sec-10/exoc5, sec-15/exoc6, exo-70/exoc7 and exo-84/exoc8.

Its function is as follows. Component of the exocyst complex involved in the docking of exocytic vesicles with fusion sites on the plasma membrane. The protein is Exocyst complex component 5 (sec-10) of Caenorhabditis elegans.